Consider the following 388-residue polypeptide: bZIP transcription factor 1-D (388 aa).

4 disordered regions span residues 1-49 (MGSS…PIPP), 103-249 (FAPY…GPTT), 261-316 (TASS…RKQA), and 348-388 (ELLS…KDTN). Low complexity-rich tracts occupy residues 23 to 33 (PPATSSTATPT) and 117 to 129 (AAGT…TAGG). Positions 169–179 (SGASANGTISQ) are enriched in polar residues. Residues 180–193 (SGESGSESSSEGSE) show a composition bias toward low complexity. Positions 214-231 (RSSQNGVSPSPSQAQLKQ) are enriched in polar residues. The 64-residue stretch at 293–356 (ELKRQKRKQS…DELLSKNSSL (64 aa)) folds into the bZIP domain. The segment at 295 to 314 (KRQKRKQSNRDSARRSRLRK) is basic motif. Residues 302–316 (SNRDSARRSRLRKQA) show a composition bias toward basic and acidic residues. Residues 321–356 (LAQRAEVLKQENASLKDEVSRIRKEYDELLSKNSSL) are leucine-zipper. 2 stretches are compositionally biased toward basic and acidic residues: residues 359–369 (NVGDKQHKTDE) and 375–388 (KLQH…KDTN).

It belongs to the bZIP family. Highly expressed in roots and at lower levels in stems and leaves.

It localises to the nucleus. In terms of biological role, probable transcription factor that may be involved in responses to fungal pathogen infection and abiotic stresses. This chain is bZIP transcription factor 1-D, found in Triticum aestivum (Wheat).